Reading from the N-terminus, the 283-residue chain is Gap junction beta-1 protein (283 aa).

Residues 1–22 are Cytoplasmic-facing; it reads MNWTGLYTLLSGVNRHSTAIGR. A helical transmembrane segment spans residues 23-45; that stretch reads VWLSVIFIFRIMVLVVAAESVWG. Topologically, residues 46-75 are extracellular; the sequence is DEKSSFICNTLQPGCNSVCYDHFFPISHVR. Residues 76-95 traverse the membrane as a helical segment; sequence LWSLQLILVSTPALLVAMHV. The Cytoplasmic portion of the chain corresponds to 96 to 130; it reads AHQQHIEKKMLRLEGHGDPIHLEEVKRHKVHISGT. A helical transmembrane segment spans residues 131 to 153; sequence LWWTYVISVVFRLLFEAAFMYVF. Over 154–191 the chain is Extracellular; sequence YLLYPGYAMVRLVKCDAYPCPNTVDCFVSRPTEKTVFT. Residues 192-214 traverse the membrane as a helical segment; it reads VFMLAASGICIILNVAEVVYLIV. The Cytoplasmic segment spans residues 215–283; it reads RACARRAQRR…AEKSDRCSAC (69 aa). Ser-233, Ser-258, Ser-266, and Ser-277 each carry phosphoserine.

This sequence belongs to the connexin family. Beta-type (group I) subfamily. As to quaternary structure, a connexon is composed of a hexamer of connexins. Interacts with CNST.

The protein localises to the cell membrane. It localises to the cell junction. Its subcellular location is the gap junction. In terms of biological role, one gap junction consists of a cluster of closely packed pairs of transmembrane channels, the connexons, through which materials of low MW diffuse from one cell to a neighboring cell. In Equus caballus (Horse), this protein is Gap junction beta-1 protein (GJB1).